We begin with the raw amino-acid sequence, 275 residues long: Formamidopyrimidine-DNA glycosylase (275 aa).

P2 functions as the Schiff-base intermediate with DNA in the catalytic mechanism. E3 acts as the Proton donor in catalysis. K59 functions as the Proton donor; for beta-elimination activity in the catalytic mechanism. DNA-binding residues include H94 and R113. The segment at 241 to 275 adopts an FPG-type zinc-finger fold; it reads LVHTHAKEPCQICGTIIQKTKVNGRGTYYCPNCQN. The Proton donor; for delta-elimination activity role is filled by R265.

This sequence belongs to the FPG family. In terms of assembly, monomer. Zn(2+) serves as cofactor.

It catalyses the reaction Hydrolysis of DNA containing ring-opened 7-methylguanine residues, releasing 2,6-diamino-4-hydroxy-5-(N-methyl)formamidopyrimidine.. It carries out the reaction 2'-deoxyribonucleotide-(2'-deoxyribose 5'-phosphate)-2'-deoxyribonucleotide-DNA = a 3'-end 2'-deoxyribonucleotide-(2,3-dehydro-2,3-deoxyribose 5'-phosphate)-DNA + a 5'-end 5'-phospho-2'-deoxyribonucleoside-DNA + H(+). Involved in base excision repair of DNA damaged by oxidation or by mutagenic agents. Acts as a DNA glycosylase that recognizes and removes damaged bases. Has a preference for oxidized purines, such as 7,8-dihydro-8-oxoguanine (8-oxoG). Has AP (apurinic/apyrimidinic) lyase activity and introduces nicks in the DNA strand. Cleaves the DNA backbone by beta-delta elimination to generate a single-strand break at the site of the removed base with both 3'- and 5'-phosphates. The sequence is that of Formamidopyrimidine-DNA glycosylase from Ureaplasma parvum serovar 3 (strain ATCC 700970).